Here is a 416-residue protein sequence, read N- to C-terminus: tRNA (guanine-N(7)-)-methyltransferase non-catalytic subunit wuho (416 aa).

Positions 47 to 88 are disordered; the sequence is TQSQESCPATATSTTAGKEPGGKEQQLAKQPEEGGTSASGSV. Residues 49 to 62 are compositionally biased toward polar residues; the sequence is SQESCPATATSTTA. 4 WD repeats span residues 89–130, 177–216, 220–258, and 317–357; these read ATST…ARLL, GHLS…DIHS, GHRE…ELLQ, and AGSW…PTTN.

Belongs to the WD repeat TRM82 family. In terms of assembly, forms a heterodimer with the catalytic subunit Mettl1. Interacts with mei-P26 and weakly interacts with bgcn; required for the function or formation of the mei-P26-bgcn-bam-sxl complex. Interacts with nanos; may be involved in mei-P26-dependent derepression of the BMP signaling pathway. Interacts with Myc; the interaction may be mediated by mei-P26 and may be involved in the regulation of ribosome biogenesis. In terms of tissue distribution, in testis, it is present at high level in hub cells, a niche for germline stem cells of testis. Ubiquitously expressed in all testicular cells throughout spermatogenesis. Ubiquitously expressed in all germline and somatic cells of the ovary.

Its subcellular location is the nucleus. The protein resides in the cytoplasm. The protein operates within tRNA modification; N(7)-methylguanine-tRNA biosynthesis. In terms of biological role, required for the Mettl1-dependent formation of N(7)-methylguanine at position 46 (m7G46) in tRNA. In the Mettl1-wuho methyltransferase complex, it is required to stabilize and induce conformational changes of the catalytic subunit. Required for binding of nanos mRNA and repression of translation by the mei-P26-bgcn-bam-sxl complex. May cooperate with mei-P26 and nanos to derepress the BMP signaling pathway. May cooperate with mei-P26 to suppress expression of a subset of microRNAs. May cooperate with mei-P26 to regulate bam expression levels in germline cells during gametogenesis. Required to promote mitosis to meiosis transition during gametogenesis. May regulate germline cell division in part by regulating ribosome biogenesis. This is tRNA (guanine-N(7)-)-methyltransferase non-catalytic subunit wuho from Drosophila erecta (Fruit fly).